A 432-amino-acid polypeptide reads, in one-letter code: Glutamate-1-semialdehyde 2,1-aminomutase (432 aa).

The residue at position 270 (K270) is an N6-(pyridoxal phosphate)lysine.

It belongs to the class-III pyridoxal-phosphate-dependent aminotransferase family. HemL subfamily. As to quaternary structure, homodimer. Pyridoxal 5'-phosphate serves as cofactor.

The protein localises to the cytoplasm. It carries out the reaction (S)-4-amino-5-oxopentanoate = 5-aminolevulinate. It participates in porphyrin-containing compound metabolism; protoporphyrin-IX biosynthesis; 5-aminolevulinate from L-glutamyl-tRNA(Glu): step 2/2. This Acinetobacter baumannii (strain ATCC 17978 / DSM 105126 / CIP 53.77 / LMG 1025 / NCDC KC755 / 5377) protein is Glutamate-1-semialdehyde 2,1-aminomutase.